Consider the following 915-residue polypeptide: Bifunctional uridylyltransferase/uridylyl-removing enzyme (915 aa).

The segment at 1–360 is uridylyltransferase; it reads MFNCAVTAID…PDEERPKKQP (360 aa). The uridylyl-removing stretch occupies residues 361–731; the sequence is INARFNQVGE…EHRELALDAV (371 aa). One can recognise an HD domain in the interval 478 to 594; sequence VDAHTLFLIR…TLFADLVGNV (117 aa). ACT domains follow at residues 732–817 and 840–915; these read QVFV…RIPR and IMSL…NDSI.

Belongs to the GlnD family. Requires Mg(2+) as cofactor.

It carries out the reaction [protein-PII]-L-tyrosine + UTP = [protein-PII]-uridylyl-L-tyrosine + diphosphate. The enzyme catalyses [protein-PII]-uridylyl-L-tyrosine + H2O = [protein-PII]-L-tyrosine + UMP + H(+). With respect to regulation, uridylyltransferase (UTase) activity is inhibited by glutamine, while glutamine activates uridylyl-removing (UR) activity. Modifies, by uridylylation and deuridylylation, the PII regulatory proteins (GlnB and homologs), in response to the nitrogen status of the cell that GlnD senses through the glutamine level. Under low glutamine levels, catalyzes the conversion of the PII proteins and UTP to PII-UMP and PPi, while under higher glutamine levels, GlnD hydrolyzes PII-UMP to PII and UMP (deuridylylation). Thus, controls uridylylation state and activity of the PII proteins, and plays an important role in the regulation of nitrogen assimilation and metabolism. In Psychrobacter arcticus (strain DSM 17307 / VKM B-2377 / 273-4), this protein is Bifunctional uridylyltransferase/uridylyl-removing enzyme.